The chain runs to 90 residues: MLCVIYRSSKRDQTYLYVEKKDDFSRVPEDLLKSFGTPQLAMVLSLEGREKLASADIEKVKEALKEEGFYLQVPPPLENLLKQHLSDDKK.

In terms of domain architecture, YcgL spans 1-85; the sequence is MLCVIYRSSK…PLENLLKQHL (85 aa).

This is YcgL domain-containing protein Spro_2755 from Serratia proteamaculans (strain 568).